We begin with the raw amino-acid sequence, 348 residues long: VIP36-like protein (348 aa).

The N-terminal stretch at 1–38 (MAATLGPLGSWQQWRRCLLARDGSRMLLLLLLLGSGQG) is a signal peptide. Residues 39 to 313 (PQQVGAGQTF…APLPPLSGLA (275 aa)) are Lumenal-facing. In terms of domain architecture, L-type lectin-like spans 49–274 (EYLKREHSLS…DVISLKLFEL (226 aa)). Residues Ser93 and Asp128 each coordinate a carbohydrate. Ca(2+) contacts are provided by Asp159, Tyr161, and Asn163. 161 to 163 (YPN) is an a carbohydrate binding site. Asn181 carries an N-linked (GlcNAc...) asparagine glycan. An a carbohydrate-binding site is contributed by His188. Asp191 contacts Ca(2+). The cysteines at positions 200 and 237 are disulfide-linked. 258-260 (GDL) is a binding site for a carbohydrate. The chain crosses the membrane as a helical span at residues 314–334 (LFHIVFFSLVIFVFAIVIGII). The Cytoplasmic segment spans residues 335–348 (LYNKWQEQSRKRFY). The short motif at 344 to 346 (RKR) is the Endoplasmic reticulum retention signal element.

It is found in the endoplasmic reticulum membrane. The protein resides in the golgi apparatus membrane. May be involved in the regulation of export from the endoplasmic reticulum of a subset of glycoproteins. May function as a regulator of ERGIC-53. In Pongo abelii (Sumatran orangutan), this protein is VIP36-like protein (LMAN2L).